Here is a 500-residue protein sequence, read N- to C-terminus: Metal transporter Nramp3.1 (500 aa).

The next 12 helical transmembrane spans lie at 51-71 (LWLF…PGNL), 79-99 (AIAG…GLLV), 128-148 (MILW…EVIG), 160-180 (VLPL…FLFL), 188-208 (LEAA…WMFA), 234-254 (AVGV…SALV), 280-300 (AALA…AKGF), 322-342 (YGGG…AAGQ), 370-390 (ALIT…VFDT), 401-421 (WLNM…LCLV), 439-459 (VSWL…LDFF), and 467-487 (VFTT…IYLI).

It belongs to the NRAMP (TC 2.A.55) family. Expressed in roots, stems, buds and leaves.

The protein localises to the golgi apparatus. It localises to the trans-Golgi network membrane. The enzyme catalyses Mn(2+)(in) = Mn(2+)(out). The catalysed reaction is Fe(2+)(in) = Fe(2+)(out). Functionally, divalent metal transporter. Can transport manganese (Mn) and iron (Fe). Involved in the control of cell-to-cell transport of manganese (Mn) between organs and tissues to monitor Mn homeostasis. This is Metal transporter Nramp3.1 from Populus trichocarpa (Western balsam poplar).